Reading from the N-terminus, the 1066-residue chain is Pumilio homolog 2 (1066 aa).

An interaction with SNAPIN region spans residues 1–260; that stretch reads MNHDFQALAL…TVGLFDYNSQ (260 aa). Residues Ser-67, Ser-70, Ser-82, and Ser-102 each carry the phosphoserine modification. Disordered regions lie at residues 106–203, 368–408, and 490–551; these read KLDS…GPLP, TANQ…AESL, and TGST…SASL. The span at 119–133 shows a compositional bias: basic and acidic residues; that stretch reads RDAETDGPEKGDQKG. A phosphoserine mark is found at Ser-136, Ser-177, and Ser-181. Thr-183 carries the post-translational modification Phosphothreonine. Positions 368 to 383 are enriched in low complexity; the sequence is TANQQAASQAQPGQQQ. A compositionally biased stretch (polar residues) spans 394–406; the sequence is ITPSQGQQGQQAE. At Thr-395 the chain carries Phosphothreonine. Residues 503-514 are compositionally biased toward low complexity; the sequence is QPPQQQQQQQQP. Positions 515–525 are enriched in polar residues; it reads STNLQSNSFYG. A compositionally biased stretch (low complexity) spans 526-540; it reads SSSLTNSSQSSSLFS. 2 positions are modified to phosphoserine: Ser-587 and Ser-592. The interval 620–650 is disordered; the sequence is SPIGMPLPSQTPGHSLTPPPSLSSHGSSSSL. Low complexity predominate over residues 630 to 650; that stretch reads TPGHSLTPPPSLSSHGSSSSL. Arg-674 bears the Omega-N-methylarginine mark. Phosphoserine is present on residues Ser-684 and Ser-700. In terms of domain architecture, PUM-HD spans 706 to 1048; it reads GRSRLLEDFR…HILAKLEKYY (343 aa). 8 Pumilio repeats span residues 726 to 761, 762 to 797, 798 to 835, 836 to 871, 872 to 907, 908 to 943, 944 to 979, and 980 to 1022; these read DLIG…IVFN, EILQ…ALAT, RIRG…EMVK, ELDG…FIID, AFKG…PILE, ELHQ…KIVS, EIRG…LLID, and EVCC…IIMH. Residues 741–745 form an adenine-nucleotide binding in RNA target region; the sequence is SRFIQ. The uracil-nucleotide binding in RNA target stretch occupies residues 777-781; it reads NYVIQ. Residues 813–817 are adenine-nucleotide binding in RNA target; that stretch reads CRVIQ. The segment at 851-855 is non-specific-nucleotide binding in RNA target; sequence NHVVQ. Positions 887–891 are adenine-nucleotide binding in RNA target; it reads CRVIQ. Residues 923-927 are uracil-nucleotide binding in RNA target; the sequence is NYVIQ. The tract at residues 959–963 is guanine-nucleotide binding in RNA target; that stretch reads SNVVE. Positions 1002 to 1006 are uracil-nucleotide binding in RNA target; that stretch reads NYVVQ.

Homodimer; homodimerizes in vitro. Interacts with DAZ1, DAZL and NANOS1 via its pumilio repeats. Interacts with NANOS3. Interacts with SNAPIN. Recruits the CCR4-POP2-NOT deadenylase leading to translational inhibition and mRNA degradation. Interacts with DDX20. In case of viral infection, interacts with DHX58. In terms of tissue distribution, widely expressed. Expressed in embryonic stem cells, heart, kidney, lung, skin, intestine, spleen and thymus. Expressed at intermediate level in brain and liver. Weakly or not expressed in muscles and stomach. Expressed at various stages of myeloid and lymphoid cell development. In the testis expressed in the spermatogoni, spermatocytes, spermatids and Sertoli cells.

It is found in the cytoplasm. It localises to the cytoplasmic granule. Its subcellular location is the perinuclear region. Its function is as follows. Sequence-specific RNA-binding protein that acts as a post-transcriptional repressor by binding the 3'-UTR of mRNA targets. Binds to an RNA consensus sequence, the Pumilio Response Element (PRE), 5'-UGUANAUA-3', that is related to the Nanos Response Element (NRE). Mediates post-transcriptional repression of transcripts via different mechanisms: acts via direct recruitment of the CCR4-POP2-NOT deadenylase leading to translational inhibition and mRNA degradation. Also mediates deadenylation-independent repression by promoting accessibility of miRNAs. Acts as a post-transcriptional repressor of E2F3 mRNAs by binding to its 3'-UTR and facilitating miRNA regulation. Plays a role in cytoplasmic sensing of viral infection. Represses a program of genes necessary to maintain genomic stability such as key mitotic, DNA repair and DNA replication factors. Its ability to repress those target mRNAs is regulated by the lncRNA NORAD (non-coding RNA activated by DNA damage) which, due to its high abundance and multitude of PUMILIO binding sites, is able to sequester a significant fraction of PUM1 and PUM2 in the cytoplasm. May regulate DCUN1D3 mRNA levels. May support proliferation and self-renewal of stem cells. Binds specifically to miRNA MIR199A precursor, with PUM1, regulates miRNA MIR199A expression at a postranscriptional level. In Mus musculus (Mouse), this protein is Pumilio homolog 2 (Pum2).